The primary structure comprises 443 residues: ATP-dependent protease ATPase subunit HslU (443 aa).

Residues Ile18 and 60–65 (GVGKTE) contribute to the ATP site. The interval 139–158 (AKNNWGQNETPAEPSSARQS) is disordered. Positions 256, 321, and 393 each coordinate ATP.

It belongs to the ClpX chaperone family. HslU subfamily. In terms of assembly, a double ring-shaped homohexamer of HslV is capped on each side by a ring-shaped HslU homohexamer. The assembly of the HslU/HslV complex is dependent on binding of ATP.

The protein resides in the cytoplasm. In terms of biological role, ATPase subunit of a proteasome-like degradation complex; this subunit has chaperone activity. The binding of ATP and its subsequent hydrolysis by HslU are essential for unfolding of protein substrates subsequently hydrolyzed by HslV. HslU recognizes the N-terminal part of its protein substrates and unfolds these before they are guided to HslV for hydrolysis. The polypeptide is ATP-dependent protease ATPase subunit HslU (Erwinia tasmaniensis (strain DSM 17950 / CFBP 7177 / CIP 109463 / NCPPB 4357 / Et1/99)).